Here is a 336-residue protein sequence, read N- to C-terminus: ATP-dependent 6-phosphofructokinase 3 (336 aa).

Residues Gly10, 72 to 73 (RE), and 108 to 111 (GNGT) each bind ATP. Asn109 lines the Mg(2+) pocket. Substrate-binding positions include 131–133 (TID), Arg168, 175–177 (MGH), Glu228, Arg255, and 261–264 (YIQR). Asp133 functions as the Proton acceptor in the catalytic mechanism.

Belongs to the phosphofructokinase type A (PFKA) family. Mixed-substrate PFK group III subfamily. As to quaternary structure, homodimer or homotetramer. It depends on Mg(2+) as a cofactor.

It localises to the cytoplasm. The enzyme catalyses beta-D-fructose 6-phosphate + ATP = beta-D-fructose 1,6-bisphosphate + ADP + H(+). It participates in carbohydrate degradation; glycolysis; D-glyceraldehyde 3-phosphate and glycerone phosphate from D-glucose: step 3/4. Functionally, catalyzes the phosphorylation of D-fructose 6-phosphate to fructose 1,6-bisphosphate by ATP, the first committing step of glycolysis. This is ATP-dependent 6-phosphofructokinase 3 from Bacteroides thetaiotaomicron (strain ATCC 29148 / DSM 2079 / JCM 5827 / CCUG 10774 / NCTC 10582 / VPI-5482 / E50).